A 383-amino-acid chain; its full sequence is Succinyl-diaminopimelate desuccinylase (383 aa).

Histidine 73 serves as a coordination point for Zn(2+). The active site involves aspartate 75. Residue aspartate 107 coordinates Zn(2+). Residue glutamate 141 is the Proton acceptor of the active site. Zn(2+) is bound by residues glutamate 142, glutamate 170, and histidine 356.

Belongs to the peptidase M20A family. DapE subfamily. Homodimer. Zn(2+) is required as a cofactor. Requires Co(2+) as cofactor.

The enzyme catalyses N-succinyl-(2S,6S)-2,6-diaminopimelate + H2O = (2S,6S)-2,6-diaminopimelate + succinate. Its pathway is amino-acid biosynthesis; L-lysine biosynthesis via DAP pathway; LL-2,6-diaminopimelate from (S)-tetrahydrodipicolinate (succinylase route): step 3/3. Functionally, catalyzes the hydrolysis of N-succinyl-L,L-diaminopimelic acid (SDAP), forming succinate and LL-2,6-diaminopimelate (DAP), an intermediate involved in the bacterial biosynthesis of lysine and meso-diaminopimelic acid, an essential component of bacterial cell walls. This Pseudomonas syringae pv. syringae (strain B728a) protein is Succinyl-diaminopimelate desuccinylase.